We begin with the raw amino-acid sequence, 240 residues long: Eukaryotic translation initiation factor 3 subunit K (240 aa).

The 181-residue stretch at 41 to 221 folds into the PCI domain; it reads YDKDIVLTIL…TIKTRNIDEK (181 aa).

Belongs to the eIF-3 subunit K family. As to quaternary structure, component of the eukaryotic translation initiation factor 3 (eIF-3) complex.

It localises to the cytoplasm. Its function is as follows. Component of the eukaryotic translation initiation factor 3 (eIF-3) complex, which is involved in protein synthesis of a specialized repertoire of mRNAs and, together with other initiation factors, stimulates binding of mRNA and methionyl-tRNAi to the 40S ribosome. The eIF-3 complex specifically targets and initiates translation of a subset of mRNAs involved in cell proliferation. This is Eukaryotic translation initiation factor 3 subunit K from Caenorhabditis briggsae.